The chain runs to 177 residues: Arginine metabolism regulation protein I (177 aa).

Polar residues predominate over residues 1–12 (MTSNSDGSSTSP). 2 disordered regions span residues 1–82 (MTSN…TRRK) and 157–177 (NASD…SPAN). The segment covering 40–53 (QDQEGDFDEEDDDD) has biased composition (acidic residues). The segment covering 56-67 (SVSTSTPTPTIT) has biased composition (low complexity). Residues 80-134 (RRKQPIRYIENKTRRHVTFSKRRHGIMKKAYELSVLTGANILLLILANSGLVYTF) enclose the MADS-box domain. The span at 158–177 (ASDTPDATDTSPAQEQSPAN) shows a compositional bias: polar residues.

As to quaternary structure, interacts with ARG81 and ARG82.

The protein localises to the nucleus. Its function is as follows. With ARG81, ARG82 and MCM1, coordinates the expression of arginine anabolic and catabolic genes in response to arginine. The protein is Arginine metabolism regulation protein I (ARG80) of Saccharomyces cerevisiae (strain ATCC 204508 / S288c) (Baker's yeast).